We begin with the raw amino-acid sequence, 1135 residues long: MRILKLLELVVKVSLFTIALSSVLLAFLIFRATDAKVEIIRGDHPEIYDDSAENEVPTAASIQREAILETLTNLMLESRTPGTRQIREEKSTIPISAEPTTQKTISVLDLPNNCLNASSLKCEIKGISTYNVYYQVENNGVIYSCVSDSAEGLEKCDNSLNLPKRFSKVPVIPITKLDKKRHFSVGGKFFISESLTQDNYPITYNSYPTNGTVSLQTVKLSGDCKITKSNFANPYTVSITSPEKIMGYLIKKPGENVEHKVISFSGSASITFTEEMLDGEHNLLCGDKSAKIPKTNKRVRDCIIKYSKSIYKQTACINFSWIRLILIALLIYFPIRWLVNKTTKPLFLWYDLMGLITYPVLLLINCLWKYFPLKCSNCGNLCIVTHECTKVCICNKSKASKEHSSECPILSKEADHDYNKHKWTSMEWFHLIVNTKLSLSLLKFVTEILIGLVILSQMPMSMAQTTQCLSGCFYVPGCPFLVTSKFEKCSEKDQCYCNVKEDKIIESIFGTNIVIEGPNDCIENQNCIARPSIDNLIKCRLGCEYLDLFRNKPLYNGFSDYTGSSLGLTSVGLYEAKRLRNGIIDSYNRQGKISGMVAGDSLNKNETSIPENILPRQSLIFDSVVDGKYRYMIEQSLLGGGGTIFMLNDKTSETAKKFVIYIKSVGIHYEVSEKYTTAPIQSTHTDFYSTCTGNCDTCRKNQALTGFQDFCVTPTSYWGCEEAWCFAINEGATCGFCRNIYDMDKSYRIYSVLKSTIVADVCISGILGGQCSRITEEVPYENTLFQADIQADLHNDGITIGELIAHGPDSHIYSGNIANLNDPVKMFGHPQLTHDGVPIFTKKTLEGDDMSWDCAAIGKKSVTIKTCGYDTYRFRSGLEQISDIPVSFKDFSSFFLAKSFSLGKLKMVVDLPSDLFKVAPKKPSITSTSLNCNGCLLCGQGLSCLLEFFSDLTFSTAISIDACSLSTYQLAVKKGSNKYNITMFCSANPDKKKMTLYPEGNPDISVEVLVNNVIVEEPENIIDQNDEYAHEEQQYNSDSSAWGFWDYIKSPFNFIASYFGSFFDTIRVVLLIAFIFLVTYFCSILTSICKGYVKNESYKSRSKIEDDDEPEIKAPMLMKDTMTRRRPPMDFSHLV.

An N-terminal signal peptide occupies residues 1–35 (MRILKLLELVVKVSLFTIALSSVLLAFLIFRATDA). Residues 36-314 (KVEIIRGDHP…KYSKSIYKQT (279 aa)) lie on the Lumenal side of the membrane. Positions 41-43 (RGD) match the Cell attachment site motif. Cystine bridges form between Cys114/Cys145 and Cys122/Cys156. Asn116 carries an N-linked (GlcNAc...) asparagine; by host glycan. Residues 177–195 (LDKKRHFSVGGKFFISESL) are non-covalent dimerization. N-linked (GlcNAc...) asparagine; by host glycosylation occurs at Asn210. Cysteines 224 and 285 form a disulfide. Residues 315-366 (ACINFSWIRLILIALLIYFPIRWLVNKTTKPLFLWYDLMGLITYPVLLLINC) traverse the membrane as a helical segment. Residues 367–484 (LWKYFPLKCS…VPGCPFLVTS (118 aa)) lie on the Cytoplasmic side of the membrane. Residues 437-484 (LSLSLLKFVTEILIGLVILSQMPMSMAQTTQCLSGCFYVPGCPFLVTS) are signal for signal peptide peptidase. Topologically, residues 485–1067 (KFEKCSEKDQ…YFGSFFDTIR (583 aa)) are lumenal. N-linked (GlcNAc...) asparagine; by host glycosylation is found at Asn605 and Asn980. The chain crosses the membrane as a helical span at residues 1068–1088 (VVLLIAFIFLVTYFCSILTSI). The Cytoplasmic segment spans residues 1089–1135 (CKGYVKNESYKSRSKIEDDDEPEIKAPMLMKDTMTRRRPPMDFSHLV).

Belongs to the tospovirus envelope glycoprotein family. As to quaternary structure, homodimer; disulfide-linked. Heterodimer with Glycoprotein C. Interacts with nucleoprotein. Heterodimer with Glycoprotein N. Interacts with nucleoprotein. In terms of processing, specific enzymatic cleavages in vivo yield mature proteins including Glycoprotein N and Glycoprotein C. Glycosylated with O-linked glycans. Glycosylation is essential for proper subcellular location. Post-translationally, cleaved at acidic pH.

It is found in the virion membrane. It localises to the host Golgi apparatus membrane. The protein localises to the host endoplasmic reticulum membrane. In terms of biological role, forms the spikes present at the surface of the virion together with Glycoprotein C. They are able to attach the virion to a cell receptor and to promote fusion of membranes after endocytosis of the virion. Plays a role in virus binding and/or entry into the vector midgut. Functionally, forms the spikes present at the surface of the virion together with Glycoprotein N. They are able to attach the virion to a cell receptor and to promote fusion of membranes after endocytosis of the virion. Probable class II fusion protein. The chain is Envelopment polyprotein (GP) from Tomato spotted wilt virus (strain Brazilian Br-01) (TSWV).